We begin with the raw amino-acid sequence, 354 residues long: Pyruvate dehydrogenase E1 component subunit alpha (354 aa).

Positions 1–29 are disordered; sequence MAKATQDSNRPHKADVGSAIPNHDLPPIP.

In terms of assembly, heterodimer of an alpha and a beta chain. The cofactor is thiamine diphosphate.

It carries out the reaction N(6)-[(R)-lipoyl]-L-lysyl-[protein] + pyruvate + H(+) = N(6)-[(R)-S(8)-acetyldihydrolipoyl]-L-lysyl-[protein] + CO2. The pyruvate dehydrogenase complex catalyzes the overall conversion of pyruvate to acetyl-CoA and CO(2). It contains multiple copies of three enzymatic components: pyruvate dehydrogenase (E1), dihydrolipoamide acetyltransferase (E2) and lipoamide dehydrogenase (E3). This chain is Pyruvate dehydrogenase E1 component subunit alpha (pdhA), found in Zymomonas mobilis subsp. mobilis (strain ATCC 31821 / ZM4 / CP4).